A 208-amino-acid polypeptide reads, in one-letter code: MDDNLQLADGGFTKNVARSGRRARQSAEMMSAEDSRQRRSSSSISTAAEGPPPKPTRRQGGWAEESSTTTNVRSGRRAAAEEPEDRRLRPQTPEGSDNESGEDIPVIPDLEEVQEEDLTMQIAAPPSVQVNRVMTYRDLDNDLMKFSAFQTLDGEIDLKLLTKVLAPEQEVREEDVGWDWDHLEVSSELQSEWDEGDREDQSPLPVCV.

Disordered stretches follow at residues 1 to 105 (MDDN…EDIP) and 187 to 208 (SELQ…PVCV). Basic and acidic residues predominate over residues 78–88 (AAAEEPEDRRL).

It belongs to the IFT43 family. As to quaternary structure, component of the IFT complex A (IFT-A) complex.

The protein localises to the cytoplasm. Its subcellular location is the cytoskeleton. It is found in the cell projection. The protein resides in the cilium. Its function is as follows. As a component of IFT complex A (IFT-A), a complex required for retrograde ciliary transport and entry into cilia of G protein-coupled receptors (GPCRs), it is involved in ciliogenesis. Involved in retrograde ciliary transport along microtubules from the ciliary tip to the base. This is Intraflagellar transport protein 43 homolog (ift43) from Danio rerio (Zebrafish).